A 352-amino-acid chain; its full sequence is Rhodopsin (352 aa).

The Extracellular portion of the chain corresponds to 1-36 (MNGTEGPDFYIPFSNKTGVVRSPFEYPQYYLAEPWK). N-linked (GlcNAc...) asparagine glycans are attached at residues Asn2 and Asn15. A helical transmembrane segment spans residues 37-61 (YSALAAYMFMLIILGFPINFLTLYV). Residues 62-73 (TVQHKKLRSPLN) are Cytoplasmic-facing. A helical transmembrane segment spans residues 74–96 (YILLNLAVADLFMVLGGFTTTLY). The Extracellular segment spans residues 97–110 (TSMNGYFVFGVTGC). A disulfide bridge links Cys110 with Cys187. Residues 111-133 (YFEGFFATLGGEVALWCLVVLAI) form a helical membrane-spanning segment. A 'Ionic lock' involved in activated form stabilization motif is present at residues 134–136 (ERY). Residues 134–152 (ERYIVVCKPMSNFRFGENH) are Cytoplasmic-facing. Residues 153–173 (AIMGVVFTWIMALTCAAPPLV) traverse the membrane as a helical segment. Residues 174-202 (GWSRYIPEGMQCSCGVDYYTLKPEVNNES) lie on the Extracellular side of the membrane. The chain crosses the membrane as a helical span at residues 203–224 (FVIYMFVVHFAIPLAVIFFCYG). Topologically, residues 225–252 (RLVCTVKEAAAQQQESATTQKAEKEVTR) are cytoplasmic. A helical membrane pass occupies residues 253–274 (MVIIMVVSFLICWVPYASVAFY). Topologically, residues 275 to 286 (IFSNQGSDFGPV) are extracellular. Residues 287 to 308 (FMTIPAFFAKSSAIYNPVIYIV) form a helical membrane-spanning segment. An N6-(retinylidene)lysine modification is found at Lys296. The Cytoplasmic portion of the chain corresponds to 309 to 352 (MNKQFRNCMITTLCCGKNPLGDDETATGSKTETSSVSTSQVSPA). Residues Cys322 and Cys323 are each lipidated (S-palmitoyl cysteine). Residues 332 to 352 (ETATGSKTETSSVSTSQVSPA) form a disordered region. Low complexity predominate over residues 335–352 (TGSKTETSSVSTSQVSPA).

Belongs to the G-protein coupled receptor 1 family. Opsin subfamily. Contains one covalently linked retinal chromophore. Upon light absorption, the covalently bound 11-cis-retinal is converted to all-trans-retinal. After hydrolysis of the Schiff base and release of the covalently bound all-trans-retinal, active rhodopsin is regenerated by binding of a fresh molecule of 11-cis-retinal. Expressed in rod-shaped photoreceptor cells in the retina that mediate vision in dim ligh (at protein level).

It is found in the membrane. It localises to the cell projection. The protein resides in the cilium. Its subcellular location is the photoreceptor outer segment. Photoreceptor required for image-forming vision at low light intensity. Required for photoreceptor cell viability after birth. Light-induced isomerization of 11-cis to all-trans retinal triggers a conformational change that activates signaling via G-proteins. Subsequent receptor phosphorylation mediates displacement of the bound G-protein alpha subunit by arrestin and terminates signaling. The sequence is that of Rhodopsin (RHO) from Alligator mississippiensis (American alligator).